A 142-amino-acid polypeptide reads, in one-letter code: Large ribosomal subunit protein uL22c (142 aa).

Belongs to the universal ribosomal protein uL22 family. In terms of assembly, part of the 50S ribosomal subunit.

It localises to the plastid. The protein localises to the chloroplast. In terms of biological role, this protein binds specifically to 23S rRNA. Functionally, the globular domain of the protein is located near the polypeptide exit tunnel on the outside of the subunit, while an extended beta-hairpin is found that lines the wall of the exit tunnel in the center of the 70S ribosome. The polypeptide is Large ribosomal subunit protein uL22c (rpl22) (Pinus thunbergii (Japanese black pine)).